The sequence spans 40 residues: SGSKTAKIGDGCFGVPIDHIGSTTDLGCGRPRPKPTPRGS.

Residues 1-8 constitute a propeptide that is removed on maturation; it reads SGSKTAKI. A disordered region spans residues 1–40; it reads SGSKTAKIGDGCFGVPIDHIGSTTDLGCGRPRPKPTPRGS. A disulfide bond links Cys12 and Cys28. The segment covering 31-40 has biased composition (basic residues); that stretch reads PRPKPTPRGS.

The protein belongs to the natriuretic peptide family. Expressed by the venom gland.

The protein localises to the secreted. Snake venom natriuretic peptide that targets both NPR1 and NPR2. Exhibits hypotensive and vasodepressor activities. The protein is Natriuretic peptide HsNP-b of Hoplocephalus stephensii (Stephens's banded snake).